The chain runs to 273 residues: Probable ribosomal RNA small subunit methyltransferase A (273 aa).

Positions 23, 25, 50, 71, 95, and 110 each coordinate S-adenosyl-L-methionine.

Belongs to the class I-like SAM-binding methyltransferase superfamily. rRNA adenine N(6)-methyltransferase family. RsmA subfamily.

It is found in the cytoplasm. Its function is as follows. Specifically dimethylates two adjacent adenosines in the loop of a conserved hairpin near the 3'-end of 16S rRNA in the 30S particle. May play a critical role in biogenesis of 30S subunits. This chain is Probable ribosomal RNA small subunit methyltransferase A, found in Pyrococcus furiosus (strain ATCC 43587 / DSM 3638 / JCM 8422 / Vc1).